A 776-amino-acid chain; its full sequence is Hepatocyte growth factor-regulated tyrosine kinase substrate (776 aa).

Residues 15–143 form the VHS domain; sequence ATSQLLLETD…IMKVEGHVFP (129 aa). The FYVE-type zinc finger occupies 160–220; the sequence is WVDAEECHRC…VCEPCYEQLN (61 aa). Residues Cys-166, Cys-169, Cys-182, Cys-185, Cys-190, and Cys-193 each coordinate Zn(2+). Position 207 is an N6-acetyllysine (Lys-207). 2 residues coordinate Zn(2+): Cys-212 and Cys-215. Tyr-216 is modified (phosphotyrosine). Positions 223–319 are disordered; the sequence is AEGKAASTTE…SPVNSSAPLA (97 aa). An interaction with SNX1 region spans residues 225–542; sequence GKAASTTELP…QRLQEQEKER (318 aa). A UIM domain is found at 258-277; sequence QEEEELQLALALSQSEAEEK. Over residues 294 to 311 the composition is skewed to low complexity; the sequence is PAPLASSAPPAGSLYSSP. Phosphotyrosine occurs at positions 308, 329, and 334. The disordered stretch occupies residues 338–401; that stretch reads KQEEARKSPT…SEQYQNGESE (64 aa). Polar residues predominate over residues 379–398; sequence TDSQPITSCSGPFSEQYQNG. The tract at residues 444–542 is interaction with SNAP25 and TRAK2; the sequence is SINSTHPQLL…QRLQEQEKER (99 aa). Positions 453 to 571 are interaction with STAM; the sequence is LELLNRLDER…FPLPYAQLQA (119 aa). An interaction with NF2 region spans residues 479–776; that stretch reads ARGALSALRE…GNETQLISFD (298 aa). An N6-succinyllysine modification is found at Lys-550. The disordered stretch occupies residues 719–776; the sequence is GQDASLPAQQPYITGQQPMYQQMAPSTGPPQQQPPVAQPPPTQGPPAQGNETQLISFD. Residues 725–743 are compositionally biased toward polar residues; sequence PAQQPYITGQQPMYQQMAP. Positions 745 to 762 are enriched in pro residues; it reads TGPPQQQPPVAQPPPTQG. Over residues 767-776 the composition is skewed to polar residues; it reads GNETQLISFD.

As to quaternary structure, component of the ESCRT-0 complex composed of STAM or STAM2 and HGS. Part of a complex at least composed of HSG, STAM2 (or probably STAM) and EPS15. Interacts with STAM. Interacts with STAM2. Interacts with EPS15; the interaction is direct, calcium-dependent and inhibited by SNAP25. Identified in a complex with STAM and LITAF. Found in a complex with STAM and E3 ligase ITCH and DTX3L. Interacts with E3 ligase DTX3L; the interaction brings together STAM and HSG, promotes their recruitment to early endosomes and decreases STAM and HGS ubiquitination by ITCH. Interacts with NF2; the interaction is direct. Interacts with ubiquitin; the interaction is direct. Interacts with VPS37C. Interacts with SMAD1, SMAD2 and SMAD3. Interacts with TSG101; the interaction mediates the association with the ESCRT-I complex. Interacts with SNAP25; the interaction is direct and decreases with addition of increasing concentrations of free calcium. Interacts with SNX1; the interaction is direct. Component of a 550 kDa membrane complex at least composed of HGS and SNX1 but excluding EGFR. Interacts with TRAK2. Interacts with TRAK1. Component of the CART complex, at least composed of ACTN4, HGS/HRS, MYO5B and TRIM3. Interacts (via UIM domain) with UBQLN1 (via ubiquitin-like domain). Interacts with ARRDC3. Identified in a complex containing at least ARRDC4, AVPR2 and HGS. Interacts with LAPTM4B; promotes HGS ubiquitination. In terms of processing, phosphorylated on Tyr-334. This phosphorylation occurs in response to EGF. A minor site of phosphorylation on Tyr-329 is detected. Protein phosphorylation may also be triggered in response to IL-2, GM-CSF and HGF. Post-translationally, ubiquitinated by ITCH. In terms of tissue distribution, ubiquitously expressed.

The protein localises to the cytoplasm. It localises to the early endosome membrane. Its subcellular location is the endosome. The protein resides in the multivesicular body membrane. Involved in intracellular signal transduction mediated by cytokines and growth factors. When associated with STAM, it suppresses DNA signaling upon stimulation by IL-2 and GM-CSF. Could be a direct effector of PI3-kinase in vesicular pathway via early endosomes and may regulate trafficking to early and late endosomes by recruiting clathrin. May concentrate ubiquitinated receptors within clathrin-coated regions. Involved in down-regulation of receptor tyrosine kinase via multivesicular body (MVBs) when complexed with STAM (ESCRT-0 complex). The ESCRT-0 complex binds ubiquitin and acts as a sorting machinery that recognizes ubiquitinated receptors and transfers them to further sequential lysosomal sorting/trafficking processes. Involved in receptor recycling via its association with the CART complex, a multiprotein complex required for efficient transferrin receptor recycling but not for EGFR degradation. May contribute to the efficient recruitment of SMADs to the activin receptor complex. The protein is Hepatocyte growth factor-regulated tyrosine kinase substrate (Hgs) of Rattus norvegicus (Rat).